The following is a 198-amino-acid chain: UPF0098 protein PH1269 (198 aa).

Belongs to the UPF0098 family.

This Pyrococcus horikoshii (strain ATCC 700860 / DSM 12428 / JCM 9974 / NBRC 100139 / OT-3) protein is UPF0098 protein PH1269.